Reading from the N-terminus, the 448-residue chain is tRNA modification GTPase MnmE (448 aa).

R25, E82, and K121 together coordinate (6S)-5-formyl-5,6,7,8-tetrahydrofolate. One can recognise a TrmE-type G domain in the interval G217–G372. Position 227 (N227) interacts with K(+). GTP is bound by residues N227–S232, T246–T252, D271–G274, and S353–R355. Position 231 (S231) interacts with Mg(2+). K(+)-binding residues include T246, I248, and T251. T252 contacts Mg(2+). K448 is a (6S)-5-formyl-5,6,7,8-tetrahydrofolate binding site.

It belongs to the TRAFAC class TrmE-Era-EngA-EngB-Septin-like GTPase superfamily. TrmE GTPase family. Homodimer. Heterotetramer of two MnmE and two MnmG subunits. K(+) is required as a cofactor.

It is found in the cytoplasm. Functionally, exhibits a very high intrinsic GTPase hydrolysis rate. Involved in the addition of a carboxymethylaminomethyl (cmnm) group at the wobble position (U34) of certain tRNAs, forming tRNA-cmnm(5)s(2)U34. The protein is tRNA modification GTPase MnmE of Methylococcus capsulatus (strain ATCC 33009 / NCIMB 11132 / Bath).